The primary structure comprises 329 residues: Ig gamma-2 chain C region (329 aa).

3 disulfides stabilise this stretch: C28–C79, C142–C202, and C248–C308. N178 carries N-linked (GlcNAc...) asparagine glycosylation.

It is found in the secreted. This Cavia porcellus (Guinea pig) protein is Ig gamma-2 chain C region.